Reading from the N-terminus, the 363-residue chain is Probable iron/ascorbate oxidoreductase DDB_G0283291 (363 aa).

The 110-residue stretch at 197-306 (IFNYPSIISS…RISFPLFFDP (110 aa)) folds into the Fe2OG dioxygenase domain. Fe cation-binding residues include H230, D232, and H286. R297 is a 2-oxoglutarate binding site.

The protein belongs to the iron/ascorbate-dependent oxidoreductase family. Fe(2+) serves as cofactor.

The protein is Probable iron/ascorbate oxidoreductase DDB_G0283291 of Dictyostelium discoideum (Social amoeba).